Here is a 418-residue protein sequence, read N- to C-terminus: Deubiquitinase and deneddylase Dub1 (418 aa).

The segment covering M1–T11 has biased composition (polar residues). The segment at M1–V23 is disordered. The helical transmembrane segment at T40 to F60 threads the bilayer. The interval T72–K145 is disordered. Residues V86–P141 are compositionally biased toward pro residues. Catalysis depends on residues H288, D305, and C358.

Belongs to the peptidase C48 family.

The protein localises to the secreted. It localises to the host cell. The protein resides in the membrane. Effector proteins function to alter host cell physiology and promote bacterial survival in host tissues. This protease possesses deubiquitinating and deneddylating activities. This is Deubiquitinase and deneddylase Dub1 (cdu1) from Chlamydia trachomatis serovar E (strain Sweden2).